Here is a 437-residue protein sequence, read N- to C-terminus: Argininosuccinate lyase (437 aa).

This sequence belongs to the lyase 1 family. Argininosuccinate lyase subfamily.

It is found in the cytoplasm. It catalyses the reaction 2-(N(omega)-L-arginino)succinate = fumarate + L-arginine. Its pathway is amino-acid biosynthesis; L-arginine biosynthesis; L-arginine from L-ornithine and carbamoyl phosphate: step 3/3. In Clostridium acetobutylicum (strain ATCC 824 / DSM 792 / JCM 1419 / IAM 19013 / LMG 5710 / NBRC 13948 / NRRL B-527 / VKM B-1787 / 2291 / W), this protein is Argininosuccinate lyase.